The chain runs to 1178 residues: Pesticidal crystal protein Cry1Ac (1178 aa).

This sequence belongs to the delta endotoxin family.

Functionally, promotes colloidosmotic lysis by binding to the midgut epithelial cells of many lepidopteran larvae. The protein is Pesticidal crystal protein Cry1Ac (cry1Ac) of Bacillus thuringiensis subsp. kurstaki.